Here is a 177-residue protein sequence, read N- to C-terminus: Translationally-controlled tumor protein homolog (177 aa).

The TCTP domain occupies 1 to 177 (MIIYRDLFSG…IKQGLVVEKC (177 aa)).

The protein belongs to the TCTP family.

Its subcellular location is the cytoplasm. Its function is as follows. Involved in calcium binding and microtubule stabilization. In Trichinella pseudospiralis (Parasitic roundworm), this protein is Translationally-controlled tumor protein homolog.